We begin with the raw amino-acid sequence, 360 residues long: Isopentenyl-diphosphate delta-isomerase (360 aa).

12-13 serves as a coordination point for substrate; sequence RK. Residues S70, 71 to 73, S101, and N130 each bind FMN; that span reads SMT. Residue 101-103 coordinates substrate; it reads SMR. Q165 contributes to the substrate binding site. E166 is a Mg(2+) binding site. Residues K197, 288 to 290, and 309 to 310 each bind FMN; these read GIR and AG.

The protein belongs to the IPP isomerase type 2 family. As to quaternary structure, homooctamer. Dimer of tetramers. The cofactor is FMN. NADPH serves as cofactor. It depends on Mg(2+) as a cofactor.

The protein resides in the cytoplasm. The catalysed reaction is isopentenyl diphosphate = dimethylallyl diphosphate. In terms of biological role, involved in the biosynthesis of isoprenoids. Catalyzes the 1,3-allylic rearrangement of the homoallylic substrate isopentenyl (IPP) to its allylic isomer, dimethylallyl diphosphate (DMAPP). This is Isopentenyl-diphosphate delta-isomerase from Chlorobium limicola (strain DSM 245 / NBRC 103803 / 6330).